The primary structure comprises 243 residues: Phosphoribosyl isomerase A (243 aa).

D9 serves as the catalytic Proton acceptor. The Proton donor role is filled by D128.

Belongs to the HisA/HisF family.

The protein localises to the cytoplasm. The catalysed reaction is 1-(5-phospho-beta-D-ribosyl)-5-[(5-phospho-beta-D-ribosylamino)methylideneamino]imidazole-4-carboxamide = 5-[(5-phospho-1-deoxy-D-ribulos-1-ylimino)methylamino]-1-(5-phospho-beta-D-ribosyl)imidazole-4-carboxamide. It catalyses the reaction N-(5-phospho-beta-D-ribosyl)anthranilate = 1-(2-carboxyphenylamino)-1-deoxy-D-ribulose 5-phosphate. It functions in the pathway amino-acid biosynthesis; L-histidine biosynthesis; L-histidine from 5-phospho-alpha-D-ribose 1-diphosphate: step 4/9. It participates in amino-acid biosynthesis; L-tryptophan biosynthesis; L-tryptophan from chorismate: step 3/5. Involved in both the histidine and tryptophan biosynthetic pathways. This chain is Phosphoribosyl isomerase A, found in Mycolicibacterium paratuberculosis (strain ATCC BAA-968 / K-10) (Mycobacterium paratuberculosis).